Consider the following 76-residue polypeptide: Small ribosomal subunit protein bS18 (76 aa).

It belongs to the bacterial ribosomal protein bS18 family. As to quaternary structure, part of the 30S ribosomal subunit. Forms a tight heterodimer with protein bS6.

Binds as a heterodimer with protein bS6 to the central domain of the 16S rRNA, where it helps stabilize the platform of the 30S subunit. The polypeptide is Small ribosomal subunit protein bS18 (Brevibacillus brevis (strain 47 / JCM 6285 / NBRC 100599)).